Reading from the N-terminus, the 263-residue chain is Chromosomal replication initiator protein DnaA (263 aa).

Glu1 is a region of interest (domain I, interacts with DnaA modulators). Position 1 (Glu1) is a region of interest, domain II. Residues 1 to 179 (ESGMGKTHLL…GSVSRLNFWS (179 aa)) form a domain III, AAA+ region region. 4 residues coordinate ATP: Gly3, Gly5, Lys6, and Thr7. The segment at 180–263 (QQNPEEKIIT…HTLAQIGEEF (84 aa)) is domain IV, binds dsDNA.

It belongs to the DnaA family. As to quaternary structure, oligomerizes as a right-handed, spiral filament on DNA at oriC.

Its subcellular location is the cytoplasm. Functionally, plays an essential role in the initiation and regulation of chromosomal replication. ATP-DnaA binds to the origin of replication (oriC) to initiate formation of the DNA replication initiation complex once per cell cycle. Binds the DnaA box (a 9 base pair repeat at the origin) and separates the double-stranded (ds)DNA. Forms a right-handed helical filament on oriC DNA; dsDNA binds to the exterior of the filament while single-stranded (ss)DNA is stabiized in the filament's interior. The ATP-DnaA-oriC complex binds and stabilizes one strand of the AT-rich DNA unwinding element (DUE), permitting loading of DNA polymerase. After initiation quickly degrades to an ADP-DnaA complex that is not apt for DNA replication. Binds acidic phospholipids. The protein is Chromosomal replication initiator protein DnaA of Mycoplasma mycoides.